The sequence spans 584 residues: Probable terpene synthase 9 (584 aa).

3 residues coordinate Mg(2+): Asp339, Asp343, and Glu491. The short motif at 339–343 (DDMYD) is the DDXXD motif element.

This sequence belongs to the terpene synthase family. Mg(2+) is required as a cofactor.

Probable sesquiterpene synthase. This Ricinus communis (Castor bean) protein is Probable terpene synthase 9 (TPS9).